We begin with the raw amino-acid sequence, 584 residues long: Aspartate--tRNA(Asp/Asn) ligase (584 aa).

Residue glutamate 174 coordinates L-aspartate. The aspartate stretch occupies residues 198 to 201; the sequence is QLFK. Arginine 220 contributes to the L-aspartate binding site. ATP is bound by residues 220-222 and glutamine 229; that span reads RDE. Histidine 447 serves as a coordination point for L-aspartate. ATP is bound at residue glutamate 480. Residue arginine 487 participates in L-aspartate binding. 532 to 535 is an ATP binding site; that stretch reads GFDR.

This sequence belongs to the class-II aminoacyl-tRNA synthetase family. Type 1 subfamily. Homodimer.

It localises to the cytoplasm. The catalysed reaction is tRNA(Asx) + L-aspartate + ATP = L-aspartyl-tRNA(Asx) + AMP + diphosphate. Aspartyl-tRNA synthetase with relaxed tRNA specificity since it is able to aspartylate not only its cognate tRNA(Asp) but also tRNA(Asn). Reaction proceeds in two steps: L-aspartate is first activated by ATP to form Asp-AMP and then transferred to the acceptor end of tRNA(Asp/Asn). This is Aspartate--tRNA(Asp/Asn) ligase from Endomicrobium trichonymphae.